Here is a 613-residue protein sequence, read N- to C-terminus: Probable Xaa-Pro aminopeptidase P (613 aa).

Mn(2+)-binding residues include Asp-408, Asp-419, Glu-517, and Glu-531.

It belongs to the peptidase M24B family. It depends on Mn(2+) as a cofactor.

The enzyme catalyses Release of any N-terminal amino acid, including proline, that is linked to proline, even from a dipeptide or tripeptide.. Catalyzes the removal of a penultimate prolyl residue from the N-termini of peptides. The sequence is that of Probable Xaa-Pro aminopeptidase P (ampp) from Penicillium rubens (strain ATCC 28089 / DSM 1075 / NRRL 1951 / Wisconsin 54-1255) (Penicillium chrysogenum).